The chain runs to 234 residues: Large ribosomal subunit protein uL1 (234 aa).

It belongs to the universal ribosomal protein uL1 family. Part of the 50S ribosomal subunit.

Functionally, binds directly to 23S rRNA. The L1 stalk is quite mobile in the ribosome, and is involved in E site tRNA release. Its function is as follows. Protein L1 is also a translational repressor protein, it controls the translation of the L11 operon by binding to its mRNA. This is Large ribosomal subunit protein uL1 from Helicobacter pylori (strain Shi470).